The following is a 79-amino-acid chain: Small ribosomal subunit protein bS18 (79 aa).

Belongs to the bacterial ribosomal protein bS18 family. In terms of assembly, part of the 30S ribosomal subunit. Forms a tight heterodimer with protein bS6.

Functionally, binds as a heterodimer with protein bS6 to the central domain of the 16S rRNA, where it helps stabilize the platform of the 30S subunit. The sequence is that of Small ribosomal subunit protein bS18 from Rhodopseudomonas palustris (strain BisB5).